A 202-amino-acid polypeptide reads, in one-letter code: tRNA (pseudouridine(54)-N(1))-methyltransferase (202 aa).

Leu-134 and Gly-155 together coordinate S-adenosyl-L-methionine.

The protein belongs to the methyltransferase superfamily. TrmY family. In terms of assembly, homodimer.

It localises to the cytoplasm. It carries out the reaction pseudouridine(54) in tRNA + S-adenosyl-L-methionine = N(1)-methylpseudouridine(54) in tRNA + S-adenosyl-L-homocysteine + H(+). Specifically catalyzes the N1-methylation of pseudouridine at position 54 (Psi54) in tRNAs. The chain is tRNA (pseudouridine(54)-N(1))-methyltransferase from Thermococcus gammatolerans (strain DSM 15229 / JCM 11827 / EJ3).